The chain runs to 104 residues: Large ribosomal subunit protein bL21 (104 aa).

The protein belongs to the bacterial ribosomal protein bL21 family. As to quaternary structure, part of the 50S ribosomal subunit. Contacts protein L20.

In terms of biological role, this protein binds to 23S rRNA in the presence of protein L20. The polypeptide is Large ribosomal subunit protein bL21 (Helicobacter pylori (strain G27)).